The chain runs to 342 residues: uncharacterized protein (342 aa).

It belongs to the cycloisomerase 2 family.

This is an uncharacterized protein from Staphylococcus aureus (strain bovine RF122 / ET3-1).